A 68-amino-acid chain; its full sequence is Sec-independent protein translocase protein TatA (68 aa).

A helical transmembrane segment spans residues 1–21 (MGSFSIWHWLIVLAVVLLLFG). The tract at residues 48-68 (AAAADKSIDGKTVDHKSDEVR) is disordered. Positions 53-68 (KSIDGKTVDHKSDEVR) are enriched in basic and acidic residues.

Belongs to the TatA/E family. In terms of assembly, the Tat system comprises two distinct complexes: a TatABC complex, containing multiple copies of TatA, TatB and TatC subunits, and a separate TatA complex, containing only TatA subunits. Substrates initially bind to the TatABC complex, which probably triggers association of the separate TatA complex to form the active translocon.

Its subcellular location is the cell inner membrane. Its function is as follows. Part of the twin-arginine translocation (Tat) system that transports large folded proteins containing a characteristic twin-arginine motif in their signal peptide across membranes. TatA could form the protein-conducting channel of the Tat system. This Sinorhizobium medicae (strain WSM419) (Ensifer medicae) protein is Sec-independent protein translocase protein TatA.